Here is a 127-residue protein sequence, read N- to C-terminus: Photosystem II reaction center Psb28 protein (127 aa).

The segment at 108–127 (LGYSQSQDSDQTEGADNQQA) is disordered. Positions 109–127 (GYSQSQDSDQTEGADNQQA) are enriched in polar residues.

The protein belongs to the Psb28 family. In terms of assembly, part of the photosystem II complex.

The protein resides in the cellular thylakoid membrane. The chain is Photosystem II reaction center Psb28 protein from Synechococcus sp. (strain CC9605).